Reading from the N-terminus, the 904-residue chain is Dual specificity tyrosine-phosphorylation-regulated kinase mbk-1 (904 aa).

Disordered regions lie at residues 1–151 (MNSG…MPPE), 250–272 (TVGRHTSLDSSGKPKTGKEASSS), and 285–345 (AVPN…YNNG). The segment covering 9–23 (NLQAWGQQPSSSYSN) has biased composition (polar residues). Residues 24–35 (TQQQHGQITGQI) are compositionally biased toward low complexity. Basic and acidic residues predominate over residues 59–75 (ELEKSKKIAEQPTEHPQ). The segment covering 112 to 123 (NNSNSQNFFPQQ) has biased composition (low complexity). The segment covering 286–297 (VPNTSSSGNQPH) has biased composition (polar residues). In terms of domain architecture, Protein kinase spans 367–690 (ILSDTPVGKG…TLFPVSHTAY (324 aa)). Residues 373–381 (VGKGSFGQV) and Lys-396 each bind ATP. Catalysis depends on Asp-495, which acts as the Proton acceptor. Disordered regions lie at residues 717 to 830 (YRPV…DQAE) and 881 to 904 (MSHGNVNAGSSRDMEKHDYPNNKL). Over residues 721 to 733 (PTSSHPISVTSSF) the composition is skewed to polar residues. The span at 749–820 (SQQNYHNPNY…VQQHSSSSSR (72 aa)) shows a compositional bias: low complexity. A compositionally biased stretch (polar residues) spans 881-890 (MSHGNVNAGS). Basic and acidic residues predominate over residues 892 to 904 (RDMEKHDYPNNKL).

It belongs to the protein kinase superfamily. CMGC Ser/Thr protein kinase family. MNB/DYRK subfamily. The cofactor is Mg(2+).

It is found in the nucleus. It carries out the reaction L-seryl-[protein] + ATP = O-phospho-L-seryl-[protein] + ADP + H(+). The catalysed reaction is L-threonyl-[protein] + ATP = O-phospho-L-threonyl-[protein] + ADP + H(+). It catalyses the reaction L-tyrosyl-[protein] + ATP = O-phospho-L-tyrosyl-[protein] + ADP + H(+). Possible role in the function of olfactory neurons. The protein is Dual specificity tyrosine-phosphorylation-regulated kinase mbk-1 of Caenorhabditis briggsae.